The chain runs to 224 residues: Jacalin-related lectin 24 (224 aa).

Residues 8–160 (MFKVGPIGSK…LTSIGIYVYP (153 aa)) form the Jacalin-type lectin domain.

This sequence belongs to the jacalin lectin family.

This Arabidopsis thaliana (Mouse-ear cress) protein is Jacalin-related lectin 24 (JAL24).